The following is an 867-amino-acid chain: Mitochondrial escape protein 2 (867 aa).

Disordered regions lie at residues 1–20 and 44–66; these read MISAHILSRQATRPGHRGPR and RTTRAWESTSSSTASTGSHKESG. Residues 1 to 41 constitute a mitochondrion transit peptide; sequence MISAHILSRQATRPGHRGPRFTTHSTALLVQRSLGQGLPLA. The Mitochondrial matrix portion of the chain corresponds to 42–308; the sequence is HRRTTRAWES…IWAWFTSHPR (267 aa). Over residues 48–59 the composition is skewed to low complexity; that stretch reads AWESTSSSTAST. The RRM domain maps to 203 to 293; it reads SRIRVEFVAA…TKLRLSYEQR (91 aa). Residues 309–329 traverse the membrane as a helical segment; sequence IVIPLVAALIAAFTVAVFDPI. Residues 330 to 867 lie on the Mitochondrial intermembrane side of the membrane; the sequence is REFFVKAHVQ…GVVKGQMVKG (538 aa). Over residues 614–639 the composition is skewed to basic and acidic residues; it reads FAHDGQQKDSESGDQDNDNKNQKKDS. The tract at residues 614–647 is disordered; sequence FAHDGQQKDSESGDQDNDNKNQKKDSNTPAPLDP. The stretch at 797–857 forms a coiled coil; sequence LLVLTELAKM…ARLKGLEKEM (61 aa).

Belongs to the YME2 family.

The protein localises to the mitochondrion inner membrane. Functionally, plays a role in maintaining the mitochondrial genome and in controlling the mtDNA escape. Involved in the regulation of mtDNA nucleotide structure and number. May have a dispensable role in early maturation of pre-rRNA. This is Mitochondrial escape protein 2 (msp-45) from Neurospora crassa (strain ATCC 24698 / 74-OR23-1A / CBS 708.71 / DSM 1257 / FGSC 987).